The chain runs to 279 residues: Complement component 1 Q subcomponent-binding protein, mitochondrial (279 aa).

A mitochondrion-targeting transit peptide spans 1 to 71; it reads MLPLLRCVPR…PVPCACGCGA (71 aa). A C1q binding region spans residues 74–91; that stretch reads TEGDKAFVEFLTDEIKEE. Residues Lys89 and Lys92 each carry the N6-acetyllysine modification. A disordered region spans residues 134-162; the sequence is NNSIPPTFDGEEEPSQGQKAEEQEPELTS. Residues 166–210 are interaction with MAVS; that stretch reads FVVEVTKTDGKKTLVLDCHYPEDEIGHEDEAESDIFSIKEVSFQT. Phosphotyrosine is present on Tyr185. Phosphoserine occurs at positions 198 and 202. Thr211 is subject to Phosphothreonine.

Belongs to the MAM33 family. In terms of assembly, homotrimer; three monomers form a donut-shaped structure with an unusually asymmetric charge distribution on the surface. Interacts with CDK13, HRK, VTN, NFYB, ADRA1B, FOXC1, DDX21, DDX50, NCL, SRSF1 and SRSF9. Interacts with CD93; the association may represent a cell surface C1q receptor. Interacts with KRT1; the association represents a cell surface kininogen receptor. Interacts with CD209; the interaction is indicative for a C1q:C1QBP:CD209 signaling complex. Interacts with FBL and RRP1; the respective interactions with C1QBP are competitive. Probably associates with the mitoribosome. Interacts with MAVS; the interaction occurs upon viral transfection. Interacts with PPIF. Interacts with U2AF1L4. Interacts with PLEKHN1. Interacts with VGF-derived peptide TLQP-21. Interacts with MRE11 and RAD50; forming the MRC (MRE11-RAD50-C1QBP) complex that inhibits the activity of MRE11. Ubiquitous.

The protein resides in the mitochondrion matrix. It localises to the nucleus. Its subcellular location is the cell membrane. The protein localises to the secreted. It is found in the cytoplasm. The protein resides in the nucleolus. Multifunctional and multicompartmental protein involved in inflammation and infection processes, ribosome biogenesis, protein synthesis in mitochondria, regulation of apoptosis, transcriptional regulation and pre-mRNA splicing. At the cell surface is thought to act as an endothelial receptor for plasma proteins of the complement and kallikrein-kinin cascades. Putative receptor for C1q; specifically binds to the globular 'heads' of C1q thus inhibiting C1; may perform the receptor function through a complex with C1qR/CD93. In complex with cytokeratin-1/KRT1 is a high affinity receptor for kininogen-1/HMWK. Can also bind other plasma proteins, such as coagulation factor XII leading to its autoactivation. May function to bind initially fluid kininogen-1 to the cell membrane. The secreted form may enhance both extrinsic and intrinsic coagulation pathways. It is postulated that the cell surface form requires docking with transmembrane proteins for downstream signaling which might be specific for a cell-type or response. By acting as C1q receptor is involved in chemotaxis of immature dendritic cells and neutrophils and is proposed to signal through CD209/DC-SIGN on immature dendritic cells, through integrin alpha-4/beta-1 during trophoblast invasion of the decidua, and through integrin beta-1 during endothelial cell adhesion and spreading. Signaling involved in inhibition of innate immune response is implicating the PI3K-AKT/PKB pathway. Required for protein synthesis in mitochondria. In mitochondrial translation may be involved in formation of functional 55S mitoribosomes; the function seems to involve its RNA-binding activity. Acts as a RNA modification reader, which specifically recognizes and binds mitochondrial RNAs modified by C5-methylcytosine (m5C) in response to stress, and promotes recruitment of the mitochondrial degradosome complex, leading to their degradation. May be involved in the nucleolar ribosome maturation process; the function may involve the exchange of FBL for RRP1 in the association with pre-ribosome particles. Involved in regulation of RNA splicing by inhibiting the RNA-binding capacity of SRSF1 and its phosphorylation. Is required for the nuclear translocation of splicing factor U2AF1L4. Involved in regulation of CDKN2A- and HRK-mediated apoptosis. Stabilizes mitochondrial CDKN2A isoform smARF. May be involved in regulation of FOXC1 transcriptional activity and NFY/CCAAT-binding factor complex-mediated transcription. May play a role in antibacterial defense as it can bind to cell surface hyaluronan and inhibit Streptococcus pneumoniae hyaluronate lyase. May be involved in modulation of the immune response; ligation by HCV core protein is resulting in suppression of interleukin-12 production in monocyte-derived dendritic cells. Involved in regulation of antiviral response by inhibiting RIGI- and IFIH1-mediated signaling pathways probably involving its association with MAVS after viral infection. Acts as a regulator of DNA repair via homologous recombination by inhibiting the activity of MRE11: interacts with unphosphorylated MRE11 and RAD50 in absence of DNA damage, preventing formation and activity of the MRN complex. Following DNA damage, dissociates from phosphorylated MRE11, allowing formation of the MRN complex. The polypeptide is Complement component 1 Q subcomponent-binding protein, mitochondrial (C1qbp) (Rattus norvegicus (Rat)).